The chain runs to 393 residues: NAD(P)H-quinone oxidoreductase subunit H, chloroplastic (393 aa).

The protein belongs to the complex I 49 kDa subunit family. In terms of assembly, NDH is composed of at least 16 different subunits, 5 of which are encoded in the nucleus.

It localises to the plastid. It is found in the chloroplast thylakoid membrane. The catalysed reaction is a plastoquinone + NADH + (n+1) H(+)(in) = a plastoquinol + NAD(+) + n H(+)(out). It carries out the reaction a plastoquinone + NADPH + (n+1) H(+)(in) = a plastoquinol + NADP(+) + n H(+)(out). In terms of biological role, NDH shuttles electrons from NAD(P)H:plastoquinone, via FMN and iron-sulfur (Fe-S) centers, to quinones in the photosynthetic chain and possibly in a chloroplast respiratory chain. The immediate electron acceptor for the enzyme in this species is believed to be plastoquinone. Couples the redox reaction to proton translocation, and thus conserves the redox energy in a proton gradient. The sequence is that of NAD(P)H-quinone oxidoreductase subunit H, chloroplastic from Daucus carota (Wild carrot).